A 423-amino-acid chain; its full sequence is Serine/threonine-protein kinase ppk25 (423 aa).

Serine 36 and serine 38 each carry phosphoserine. A Protein kinase domain is found at 53 to 305 (WIIKKTIGAG…LEQAAKFPWL (253 aa)). ATP is bound by residues 59–67 (IGAGSMGKV) and lysine 82. Aspartate 175 serves as the catalytic Proton acceptor.

The protein belongs to the protein kinase superfamily. Ser/Thr protein kinase family.

The protein localises to the cytoplasm. It catalyses the reaction L-seryl-[protein] + ATP = O-phospho-L-seryl-[protein] + ADP + H(+). It carries out the reaction L-threonyl-[protein] + ATP = O-phospho-L-threonyl-[protein] + ADP + H(+). The sequence is that of Serine/threonine-protein kinase ppk25 (ppk25) from Schizosaccharomyces pombe (strain 972 / ATCC 24843) (Fission yeast).